The primary structure comprises 362 residues: E3 ubiquitin-protein ligase TM129 (362 aa).

Topologically, residues 1 to 6 (MDSPEV) are lumenal. A helical transmembrane segment spans residues 7–27 (TFTLAYLVFAVCFVFTPNEFY). The Cytoplasmic portion of the chain corresponds to 28–56 (SAGLTVQNLLSGWLGSEDAAFVPYHLRRT). A helical membrane pass occupies residues 57–77 (SATLLCHSLLPLGYYMGMCFA). Topologically, residues 78-94 (ASEKQLYSPGQAPEAWQ) are lumenal. A helical membrane pass occupies residues 95–115 (LFLLLAVTLPLLSCTLIYYWS). At 116–362 (WDRWTRHPLA…FCILDVCCVR (247 aa)) the chain is on the cytoplasmic side. The RING-type; degenerate zinc-finger motif lies at 285–350 (CIGCMQTRAS…ASRVPCPTCR (66 aa)).

Belongs to the TMEM129 family. In terms of assembly, integral component of ER-resident dislocation complexes.

The protein localises to the endoplasmic reticulum membrane. The catalysed reaction is S-ubiquitinyl-[E2 ubiquitin-conjugating enzyme]-L-cysteine + [acceptor protein]-L-lysine = [E2 ubiquitin-conjugating enzyme]-L-cysteine + N(6)-ubiquitinyl-[acceptor protein]-L-lysine.. It participates in protein modification; protein ubiquitination. In terms of biological role, E3 ubiquitin-protein ligase involved in ER-associated protein degradation, preferentially associates with the E2 enzyme UBE2J2. Exploited by viral US11 proteins to mediate HLA class I proteins degradation. This is E3 ubiquitin-protein ligase TM129 (Tmem129) from Mus musculus (Mouse).